A 580-amino-acid polypeptide reads, in one-letter code: E3 ubiquitin-protein ligase TRIM45 (580 aa).

An RING-type zinc finger spans residues 29–98 (CPLCLGLFKA…QIGILCPVCD (70 aa)). 2 consecutive B box-type zinc fingers follow at residues 130–176 (GQGL…MVDL) and 186–227 (GKPI…CDFT). Residues C135, C138, C158, H162, C191, H194, C214, and H219 each contribute to the Zn(2+) site. A coiled-coil region spans residues 281-335 (SEGYIKAIEEHRDKLLKQLEDIRAQKENSLQLQKAQLEQLLADMRTGVEFTEHLL). One copy of the Filamin repeat lies at 394-497 (TKEVDPAKCV…VQGSPFTVMV (104 aa)).

The protein belongs to the TRIM/RBCC family. Expressed in skeletal muscle, brain, heart and pancreas.

It localises to the cytoplasm. Its subcellular location is the nucleus. It catalyses the reaction S-ubiquitinyl-[E2 ubiquitin-conjugating enzyme]-L-cysteine + [acceptor protein]-L-lysine = [E2 ubiquitin-conjugating enzyme]-L-cysteine + N(6)-ubiquitinyl-[acceptor protein]-L-lysine.. Functionally, E3 ubiquitin-protein ligase that plays a role in the regulation of inflammatory response. Mechanistically, mediates the 'Lys-48'-linked polyubiquitination of TAB2, a regulatory protein of the kinase TAK1, leading to its degradation via the proteasomal pathway and inhibition of the TLR-mediated inflammatory immune response. May act as a transcriptional repressor in mitogen-activated protein kinase signaling pathway. This is E3 ubiquitin-protein ligase TRIM45 (TRIM45) from Homo sapiens (Human).